Here is a 261-residue protein sequence, read N- to C-terminus: 3-deoxy-manno-octulosonate cytidylyltransferase (261 aa).

Belongs to the KdsB family.

It is found in the cytoplasm. It carries out the reaction 3-deoxy-alpha-D-manno-oct-2-ulosonate + CTP = CMP-3-deoxy-beta-D-manno-octulosonate + diphosphate. It participates in nucleotide-sugar biosynthesis; CMP-3-deoxy-D-manno-octulosonate biosynthesis; CMP-3-deoxy-D-manno-octulosonate from 3-deoxy-D-manno-octulosonate and CTP: step 1/1. Its pathway is bacterial outer membrane biogenesis; lipopolysaccharide biosynthesis. In terms of biological role, activates KDO (a required 8-carbon sugar) for incorporation into bacterial lipopolysaccharide in Gram-negative bacteria. This Dechloromonas aromatica (strain RCB) protein is 3-deoxy-manno-octulosonate cytidylyltransferase.